The sequence spans 297 residues: 4-hydroxy-tetrahydrodipicolinate synthase (297 aa).

T50 contributes to the pyruvate binding site. Y138 (proton donor/acceptor) is an active-site residue. K166 acts as the Schiff-base intermediate with substrate in catalysis. I208 lines the pyruvate pocket.

The protein belongs to the DapA family. Homotetramer; dimer of dimers.

Its subcellular location is the cytoplasm. It catalyses the reaction L-aspartate 4-semialdehyde + pyruvate = (2S,4S)-4-hydroxy-2,3,4,5-tetrahydrodipicolinate + H2O + H(+). It functions in the pathway amino-acid biosynthesis; L-lysine biosynthesis via DAP pathway; (S)-tetrahydrodipicolinate from L-aspartate: step 3/4. Its function is as follows. Catalyzes the condensation of (S)-aspartate-beta-semialdehyde [(S)-ASA] and pyruvate to 4-hydroxy-tetrahydrodipicolinate (HTPA). The polypeptide is 4-hydroxy-tetrahydrodipicolinate synthase (Gluconobacter oxydans (strain 621H) (Gluconobacter suboxydans)).